The sequence spans 404 residues: Tryptophan synthase beta chain (404 aa).

Lys-98 carries the N6-(pyridoxal phosphate)lysine modification.

This sequence belongs to the TrpB family. As to quaternary structure, tetramer of two alpha and two beta chains. Pyridoxal 5'-phosphate serves as cofactor.

It carries out the reaction (1S,2R)-1-C-(indol-3-yl)glycerol 3-phosphate + L-serine = D-glyceraldehyde 3-phosphate + L-tryptophan + H2O. It participates in amino-acid biosynthesis; L-tryptophan biosynthesis; L-tryptophan from chorismate: step 5/5. In terms of biological role, the beta subunit is responsible for the synthesis of L-tryptophan from indole and L-serine. The polypeptide is Tryptophan synthase beta chain (Rhodopseudomonas palustris (strain BisB18)).